The chain runs to 24 residues: Myotoxin TmC4-47.2 (24 aa).

A disordered region spans residues 1-24; that stretch reads KASSSAPKGWTHHGSRFTFHRGSM. A compositionally biased stretch (basic residues) spans 10-24; it reads WTHHGSRFTFHRGSM. The C-type lectin domain maps to 13-24; sequence HGSRFTFHRGSM.

Expressed by the venom gland.

The protein localises to the secreted. Functionally, able to depolarize frog skeletal muscle fibers, but has no effects on squid giant axons. Tetrodotoxin is able to partially antagonize the depolarization. Induces myonecrosis. The sequence is that of Myotoxin TmC4-47.2 from Thalassophryne maculosa (Cano toadfish).